Consider the following 445-residue polypeptide: Protein cereblon (445 aa).

Positions 1–48 (MAGEGDQQDAAHNMGNHLPLLPADSEDEDDEIEMEVEDQDSKEARKPN) are disordered. The segment covering 24–38 (DSEDEDDEIEMEVED) has biased composition (acidic residues). Phosphoserine is present on Ser-25. The region spanning 84-322 (IPVLPEVLMI…CELDIMNKCT (239 aa)) is the Lon N-terminal domain. One can recognise a CULT domain in the interval 321–429 (CTSLCCKQCQ…LTRSALLPTI (109 aa)). The Zn(2+) site is built by Cys-326 and Cys-329. Residues His-381, Trp-383, and Trp-389 each contribute to the (S)-thalidomide site. Zn(2+) is bound by residues Cys-394 and Cys-397.

Belongs to the CRBN family. Component of a DCX (DDB1-CUL4-X-box) protein ligase complex, at least composed of CRBN, CUL4A, DDB1 and RBX1. Interacts directly with DDB1. Interacts with KCNT1. Interacts with ILF2. Interacts with TRAF6 and ECSIT. In terms of processing, ubiquitinated, ubiquitination is mediated by its own DCX protein ligase complex. Highly expressed in brain.

Its subcellular location is the cytoplasm. The protein localises to the nucleus. The protein resides in the membrane. It functions in the pathway protein modification; protein ubiquitination. Its function is as follows. Substrate recognition component of a DCX (DDB1-CUL4-X-box) E3 protein ligase complex that mediates the ubiquitination and subsequent proteasomal degradation of target proteins, such as MEIS2, ILF2 or GLUL. Normal degradation of key regulatory proteins is required for normal limb outgrowth and expression of the fibroblast growth factor FGF8. Maintains presynaptic glutamate release and consequently, cognitive functions such as memory and learning, by negatively regulating large-conductance calcium-activated potassium (BK) channels in excitatory neurons. Likely to function by regulating the assembly and neuronal surface expression of BK channels via its interaction with KCNT1. May also be involved in regulating anxiety-like behaviors via a BK channel-independent mechanism. Plays a negative role in TLR4 signaling by interacting with TRAF6 and ECSIT, leading to inhibition of ECSIT ubiquitination, an important step of the signaling. The polypeptide is Protein cereblon (Crbn) (Mus musculus (Mouse)).